We begin with the raw amino-acid sequence, 119 residues long: Large ribosomal subunit protein uL14 (119 aa).

It belongs to the universal ribosomal protein uL14 family. Part of the 50S ribosomal subunit. Forms a cluster with proteins L3 and L19. In the 70S ribosome, L14 and L19 interact and together make contacts with the 16S rRNA in bridges B5 and B8.

Functionally, binds to 23S rRNA. Forms part of two intersubunit bridges in the 70S ribosome. The protein is Large ribosomal subunit protein uL14 of Anaplasma phagocytophilum (strain HZ).